A 282-amino-acid polypeptide reads, in one-letter code: ATP phosphoribosyltransferase (282 aa).

Belongs to the ATP phosphoribosyltransferase family. Long subfamily. It depends on Mg(2+) as a cofactor.

The protein localises to the cytoplasm. The catalysed reaction is 1-(5-phospho-beta-D-ribosyl)-ATP + diphosphate = 5-phospho-alpha-D-ribose 1-diphosphate + ATP. Its pathway is amino-acid biosynthesis; L-histidine biosynthesis; L-histidine from 5-phospho-alpha-D-ribose 1-diphosphate: step 1/9. With respect to regulation, feedback inhibited by histidine. In terms of biological role, catalyzes the condensation of ATP and 5-phosphoribose 1-diphosphate to form N'-(5'-phosphoribosyl)-ATP (PR-ATP). Has a crucial role in the pathway because the rate of histidine biosynthesis seems to be controlled primarily by regulation of HisG enzymatic activity. This chain is ATP phosphoribosyltransferase, found in Pyrobaculum aerophilum (strain ATCC 51768 / DSM 7523 / JCM 9630 / CIP 104966 / NBRC 100827 / IM2).